The primary structure comprises 271 residues: Chymotrypsin-like elastase family member 2A (271 aa).

A signal peptide spans 1–16 (MIRTLLLSALVAGALS). Residues 17–30 (CGYPTYEVEDDVSR) constitute a propeptide, activation peptide. Positions 31 to 269 (VVGGQEATPN…YIDWINSVMA (239 aa)) constitute a Peptidase S1 domain. Cysteines 60 and 76 form a disulfide. Catalysis depends on charge relay system residues His-75 and Asp-123. 3 disulfide bridges follow: Cys-157/Cys-224, Cys-188/Cys-204, and Cys-214/Cys-245. Ser-218 functions as the Charge relay system in the catalytic mechanism.

This sequence belongs to the peptidase S1 family. Elastase subfamily. Interacts with CPA1. Interacts with SERPINA1. Highly expressed in pancreas (at mRNA and protein levels). Also expressed in adrenal gland and small intestine.

It is found in the secreted. It carries out the reaction Preferential cleavage: Leu-|-Xaa, Met-|-Xaa and Phe-|-Xaa. Hydrolyzes elastin.. Functionally, elastase that enhances insulin signaling and might have a physiologic role in cellular glucose metabolism. Circulates in plasma and reduces platelet hyperactivation, triggers both insulin secretion and degradation, and increases insulin sensitivity. This chain is Chymotrypsin-like elastase family member 2A, found in Mus musculus (Mouse).